The sequence spans 344 residues: Putative esterase NocK (344 aa).

The tat-type signal signal peptide spans 1–34; it reads MIGVTRRSGLALAVLVSSAACAGAEPVAPPPAPA. Residues 265 to 295 form a disordered region; that stretch reads GGADERRREEARPAAAPGGTSTSRETCANPD. The segment covering 266-276 has biased composition (basic and acidic residues); the sequence is GADERRREEAR.

This sequence belongs to the AB hydrolase superfamily. In terms of processing, predicted to be exported by the Tat system. The position of the signal peptide cleavage has not been experimentally proven.

This Nocardia uniformis subsp. tsuyamanensis protein is Putative esterase NocK.